The primary structure comprises 299 residues: Homeobox protein Nkx-2.5 (299 aa).

Basic and acidic residues predominate over residues 90–119 (KDPKDHKKDICPLQKTLEHDKREAEDPERP). A disordered region spans residues 90 to 128 (KDPKDHKKDICPLQKTLEHDKREAEDPERPRQRKRRKPR). Residues 124–183 (RRKPRVLFSQAQVYELERRFKQQKYLSAPERDHLANVLKLTSTQVKIWFQNRRYKCKRQR) constitute a DNA-binding region (homeobox).

The protein belongs to the NK-2 homeobox family. Homodimer (via the homeobox); binds DNA as homodimer. In terms of tissue distribution, heart and gut tissue.

The protein localises to the nucleus. Transcription factor required for the development of the heart and the spleen. Implicated in commitment to and/or differentiation of the myocardial lineage. May regulate the expression of genes involved in cardiogenesis and play a role in the formation of gut and the pharyngeal region. Binds to the core DNA motif of promoter. The protein is Homeobox protein Nkx-2.5 (nkx-2.5) of Xenopus laevis (African clawed frog).